A 62-amino-acid chain; its full sequence is Small ribosomal subunit protein bS21C (62 aa).

Residues 43 to 62 (EKSKRKKLALHKQSKRRFRT) form a disordered region. Positions 45–62 (SKRKKLALHKQSKRRFRT) are enriched in basic residues.

It belongs to the bacterial ribosomal protein bS21 family.

In Trichormus variabilis (strain ATCC 29413 / PCC 7937) (Anabaena variabilis), this protein is Small ribosomal subunit protein bS21C.